Reading from the N-terminus, the 824-residue chain is Vesicle-fusing ATPase (824 aa).

ATP contacts are provided by residues 582–587 and 622–629; these read RGMIVW and AKTGKTSL. T627 is a binding site for Mg(2+).

This sequence belongs to the AAA ATPase family. As to quaternary structure, homohexamer. Mg(2+) is required as a cofactor.

It localises to the cytoplasm. The enzyme catalyses ATP + H2O = ADP + phosphate + H(+). Its function is as follows. Required for vesicle-mediated transport. Catalyzes the fusion of transport vesicles within the Golgi cisternae. Is also required for transport from the endoplasmic reticulum to the Golgi stack. Seems to function as a fusion protein required for the delivery of cargo proteins to all compartments of the Golgi stack independent of vesicle origin. The polypeptide is Vesicle-fusing ATPase (nsf-1) (Caenorhabditis elegans).